We begin with the raw amino-acid sequence, 320 residues long: Methionyl-tRNA formyltransferase (320 aa).

111-114 is a (6S)-5,6,7,8-tetrahydrofolate binding site; the sequence is SLLP.

This sequence belongs to the Fmt family.

The enzyme catalyses L-methionyl-tRNA(fMet) + (6R)-10-formyltetrahydrofolate = N-formyl-L-methionyl-tRNA(fMet) + (6S)-5,6,7,8-tetrahydrofolate + H(+). Attaches a formyl group to the free amino group of methionyl-tRNA(fMet). The formyl group appears to play a dual role in the initiator identity of N-formylmethionyl-tRNA by promoting its recognition by IF2 and preventing the misappropriation of this tRNA by the elongation apparatus. This chain is Methionyl-tRNA formyltransferase, found in Pediococcus pentosaceus (strain ATCC 25745 / CCUG 21536 / LMG 10740 / 183-1w).